The primary structure comprises 338 residues: Ketol-acid reductoisomerase (NADP(+)) (338 aa).

The KARI N-terminal Rossmann domain maps to 1–181; the sequence is MKVFYDKDCD…GGGRTGIIET (181 aa). Residues 24 to 27, Arg-47, Ser-50, Thr-52, and 82 to 85 contribute to the NADP(+) site; these read YGSQ and DEFQ. His-107 is a catalytic residue. Position 133 (Gly-133) interacts with NADP(+). Residues 182 to 327 form the KARI C-terminal knotted domain; that stretch reads TFKDETETDL…EKLRSMMPWI (146 aa). The Mg(2+) site is built by Asp-190, Glu-194, Glu-226, and Glu-230. Ser-251 is a substrate binding site.

Belongs to the ketol-acid reductoisomerase family. It depends on Mg(2+) as a cofactor.

It catalyses the reaction (2R)-2,3-dihydroxy-3-methylbutanoate + NADP(+) = (2S)-2-acetolactate + NADPH + H(+). The enzyme catalyses (2R,3R)-2,3-dihydroxy-3-methylpentanoate + NADP(+) = (S)-2-ethyl-2-hydroxy-3-oxobutanoate + NADPH + H(+). The protein operates within amino-acid biosynthesis; L-isoleucine biosynthesis; L-isoleucine from 2-oxobutanoate: step 2/4. It participates in amino-acid biosynthesis; L-valine biosynthesis; L-valine from pyruvate: step 2/4. Involved in the biosynthesis of branched-chain amino acids (BCAA). Catalyzes an alkyl-migration followed by a ketol-acid reduction of (S)-2-acetolactate (S2AL) to yield (R)-2,3-dihydroxy-isovalerate. In the isomerase reaction, S2AL is rearranged via a Mg-dependent methyl migration to produce 3-hydroxy-3-methyl-2-ketobutyrate (HMKB). In the reductase reaction, this 2-ketoacid undergoes a metal-dependent reduction by NADPH to yield (R)-2,3-dihydroxy-isovalerate. The chain is Ketol-acid reductoisomerase (NADP(+)) from Pseudomonas syringae pv. tomato (strain ATCC BAA-871 / DC3000).